Reading from the N-terminus, the 256-residue chain is Major prion protein (256 aa).

A signal peptide spans 1 to 24 (MVKSHIGSWILVLFVAMWSDVGLC). The tract at residues 25–233 (KKRPKPGGGW…ESQAYYQRGA (209 aa)) is interaction with GRB2, ERI3 and SYN1. Residues 28–110 (PKPGGGWNTG…QWNKPSKPKT (83 aa)) are disordered. Repeat copies occupy residues 54-62 (PQGGGGWGQ), 63-70 (PHGGGWGQ), 71-78 (PHGGGWGQ), 79-86 (PHGGGWGQ), and 87-95 (PHGGGGWGQ). The tract at residues 54 to 95 (PQGGGGWGQPHGGGWGQPHGGGWGQPHGGGWGQPHGGGGWGQ) is 5 X 8 AA tandem repeats of P-H-G-G-G-W-G-Q. Gly residues predominate over residues 55 to 97 (QGGGGWGQPHGGGWGQPHGGGWGQPHGGGWGQPHGGGGWGQGG). The Cu(2+) site is built by H64, G65, G66, H72, G73, G74, H80, G81, G82, H88, G90, and G91. C182 and C217 are disulfide-bonded. N184 and N200 each carry an N-linked (GlcNAc...) asparagine glycan. A lipid anchor (GPI-anchor amidated alanine) is attached at A233. Residues 234 to 256 (SVILFSPPPVILLISFLIFLIVG) constitute a propeptide, removed in mature form.

It belongs to the prion family. In terms of assembly, monomer and homodimer. Has a tendency to aggregate into amyloid fibrils containing a cross-beta spine, formed by a steric zipper of superposed beta-strands. Soluble oligomers may represent an intermediate stage on the path to fibril formation. Copper binding may promote oligomerization. Interacts with GRB2, APP, ERI3/PRNPIP and SYN1. Mislocalized cytosolically exposed PrP interacts with MGRN1; this interaction alters MGRN1 subcellular location and causes lysosomal enlargement. Interacts with KIAA1191.

It localises to the cell membrane. The protein localises to the golgi apparatus. Its function is as follows. Its primary physiological function is unclear. Has cytoprotective activity against internal or environmental stresses. May play a role in neuronal development and synaptic plasticity. May be required for neuronal myelin sheath maintenance. May play a role in iron uptake and iron homeostasis. Soluble oligomers are toxic to cultured neuroblastoma cells and induce apoptosis (in vitro). Association with GPC1 (via its heparan sulfate chains) targets PRNP to lipid rafts. Also provides Cu(2+) or Zn(2+) for the ascorbate-mediated GPC1 deaminase degradation of its heparan sulfate side chains. In Capra hircus (Goat), this protein is Major prion protein (PRNP).